We begin with the raw amino-acid sequence, 428 residues long: Proteinase-activated receptor 1 (428 aa).

The N-terminal stretch at 1–21 (MGPQRLLLVAAGLSLCGPLLS) is a signal peptide. Residues 22-41 (SRVPVRQPESEMTDATVNPR) constitute a propeptide, removed for receptor activation. Over 42–105 (SFFLRNPGEN…SGYLTSPWLR (64 aa)) the chain is Extracellular. N-linked (GlcNAc...) asparagine glycans are attached at residues Asn65 and Asn78. The chain crosses the membrane as a helical span at residues 106-131 (LFIPSVYTFVFVVSLPLNILAIAVFV). At 132–140 (LKMKVKKPA) the chain is on the cytoplasmic side. A helical membrane pass occupies residues 141-160 (VVYMLHLAMADVLFVSVLPL). Residues 161 to 179 (KISYYFSGSDWQFGSGMCR) lie on the Extracellular side of the membrane. Residues Cys178 and Cys257 are joined by a disulfide bond. Residues 180-201 (FATAAFYCNMYASIMLMTVISI) form a helical membrane-spanning segment. At 202 to 221 (DRFLAVVYPIQSLSWRTLGR) the chain is on the cytoplasmic side. A helical transmembrane segment spans residues 222–242 (ANFTCLVIWVMAIMGVVPLLL). Topologically, residues 243 to 271 (KEQTTRVPGLNITTCHDVLNETLLQGFYS) are extracellular. Asn253 and Asn262 each carry an N-linked (GlcNAc...) asparagine glycan. Residues 272-291 (YYFSAFSAVFFLVPLIISTI) traverse the membrane as a helical segment. Residues 292 to 314 (CYMSIIRCLSSSSVANRSKKSRA) are Cytoplasmic-facing. The chain crosses the membrane as a helical span at residues 315–337 (LFLSAAVFCVFIVCFGPTNVLLI). Over 338-352 (MHYLLLSDSPATEKA) the chain is Extracellular. A helical transmembrane segment spans residues 353–377 (YFAYLLCVCVSSVSCCIDPLIYYYA). At 378–428 (SSECQRHLYGILCCKESSDPNSYNSTGQLMPSKMDTCSSHLNNSIYKKLLA) the chain is on the cytoplasmic side. Position 421 is a phosphoserine (Ser421).

Belongs to the G-protein coupled receptor 1 family. Post-translationally, proteolytic cleavage by thrombin generates a new N-terminus that functions as a tethered ligand. Also proteolytically cleaved by cathepsin CTSG. Phosphorylated in the C-terminal tail; probably mediating desensitization prior to the uncoupling and internalization of the receptor.

It localises to the cell membrane. High affinity receptor that binds the activated thrombin, leading to calcium release from intracellular stores. The thrombin-activated receptor signaling pathway is mediated through PTX-insensitive G proteins, activation of phospholipase C resulting in the production of 1D-myo-inositol 1,4,5-trisphosphate (InsP3) which binds to InsP3 receptors causing calcium release from the stores. In astrocytes, the calcium released into the cytosol allows the Ca(2+)-dependent release of L-glutamate into the synaptic cleft through BEST1, that targets the neuronal postsynaptic GRIN2A/NMDAR receptor resulting in the synaptic plasticity regulation. May play a role in platelets activation and in vascular development. Mediates up-regulation of pro-inflammatory cytokines, such as MCP-1/CCL2 and IL6, triggered by coagulation factor Xa (F10) in cardiac fibroblasts and umbilical vein endothelial cells. This Cricetulus longicaudatus (Long-tailed dwarf hamster) protein is Proteinase-activated receptor 1.